A 130-amino-acid chain; its full sequence is Small ribosomal subunit protein uS11 (130 aa).

This sequence belongs to the universal ribosomal protein uS11 family. Part of the 30S ribosomal subunit. Interacts with proteins S7 and S18. Binds to IF-3.

Located on the platform of the 30S subunit, it bridges several disparate RNA helices of the 16S rRNA. Forms part of the Shine-Dalgarno cleft in the 70S ribosome. The polypeptide is Small ribosomal subunit protein uS11 (Campylobacter curvus (strain 525.92)).